The primary structure comprises 1083 residues: Glutamate receptor-interacting protein 2 (1083 aa).

PDZ domains follow at residues 58 to 141, 156 to 244, and 258 to 342; these read IVEL…EYEL, TIEI…EYDV, and LVEI…LPAH. Over residues 408 to 422 the composition is skewed to polar residues; the sequence is AGTPGFSSQNSNTLP. Residues 408-460 are disordered; the sequence is AGTPGFSSQNSNTLPRTVHPMSPRTTMNRRRQKRKDHKSSLSLASSTVGPGGQ. The span at 434–444 shows a compositional bias: basic residues; that stretch reads MNRRRQKRKDH. PDZ domains are found at residues 468–555, 569–652, and 667–749; these read EIIL…EIEF, HVKL…RKDE, and TVEL…KKQT. Disordered stretches follow at residues 754-783, 853-872, and 936-965; these read PQRL…LSEI, NEQD…GLET, and GSHH…VHNA. A compositionally biased stretch (polar residues) spans 774 to 783; sequence SQKTSKLSEI. A compositionally biased stretch (basic and acidic residues) spans 945–963; that stretch reads PKKENKLSQDARSKKEEVH. The PDZ 7 domain maps to 974-1056; that stretch reads KVTVQKDMDT…RLDLVISRGL (83 aa).

The protein belongs to the GRIP2 family. Enriched in the mitochondrial cloud of stage I oocytes, before becoming concentrated at the tip of the vegetal cortex in stage II oocytes. Expression becomes localized to the germ plasm of stage III-IV oocytes and early cleavage stages. At the tailbud stage, localizes to the migrating primordial germ cells (PGCs) until PGC migration is complete (stage 40), at which point expression disappears. In the adult, expressed in the brain, ovary, eye, muscle, spinal cord and very weakly in adipocytes.

The protein localises to the cytoplasm. In terms of biological role, plays an important role in primordial germ cell (PGC) maintenance and efficiency of PGC migration. The polypeptide is Glutamate receptor-interacting protein 2 (Xenopus laevis (African clawed frog)).